Here is a 612-residue protein sequence, read N- to C-terminus: Dihydroxy-acid dehydratase (612 aa).

Mg(2+) is bound at residue Asp81. Position 122 (Cys122) interacts with [2Fe-2S] cluster. The Mg(2+) site is built by Asp123 and Lys124. N6-carboxylysine is present on Lys124. Cys195 provides a ligand contact to [2Fe-2S] cluster. Glu491 provides a ligand contact to Mg(2+). Ser517 functions as the Proton acceptor in the catalytic mechanism.

This sequence belongs to the IlvD/Edd family. As to quaternary structure, homodimer. [2Fe-2S] cluster is required as a cofactor. It depends on Mg(2+) as a cofactor.

It catalyses the reaction (2R)-2,3-dihydroxy-3-methylbutanoate = 3-methyl-2-oxobutanoate + H2O. The enzyme catalyses (2R,3R)-2,3-dihydroxy-3-methylpentanoate = (S)-3-methyl-2-oxopentanoate + H2O. It participates in amino-acid biosynthesis; L-isoleucine biosynthesis; L-isoleucine from 2-oxobutanoate: step 3/4. It functions in the pathway amino-acid biosynthesis; L-valine biosynthesis; L-valine from pyruvate: step 3/4. In terms of biological role, functions in the biosynthesis of branched-chain amino acids. Catalyzes the dehydration of (2R,3R)-2,3-dihydroxy-3-methylpentanoate (2,3-dihydroxy-3-methylvalerate) into 2-oxo-3-methylpentanoate (2-oxo-3-methylvalerate) and of (2R)-2,3-dihydroxy-3-methylbutanoate (2,3-dihydroxyisovalerate) into 2-oxo-3-methylbutanoate (2-oxoisovalerate), the penultimate precursor to L-isoleucine and L-valine, respectively. The protein is Dihydroxy-acid dehydratase of Rhizobium johnstonii (strain DSM 114642 / LMG 32736 / 3841) (Rhizobium leguminosarum bv. viciae).